Consider the following 672-residue polypeptide: Zinc finger and BTB domain-containing protein 24 (672 aa).

Residues cysteine 39–glutamate 105 enclose the BTB domain. The disordered stretch occupies residues histidine 136–arginine 208. The a.T hook 1 DNA-binding region spans lysine 140–leucine 152. Positions lysine 148–proline 158 are enriched in basic and acidic residues. Residues serine 160–glutamine 171 are compositionally biased toward polar residues. A compositionally biased stretch (basic residues) spans glutamate 198–arginine 208. A DNA-binding region (a.T hook 2) is located at residues proline 223–threonine 235. C2H2-type zinc fingers lie at residues alanine 237–histidine 259, phenylalanine 265–histidine 287, tyrosine 293–histidine 315, phenylalanine 321–histidine 343, proline 349–histidine 371, phenylalanine 377–histidine 399, tyrosine 405–histidine 427, and phenylalanine 433–histidine 455. The disordered stretch occupies residues lysine 453 to lysine 492. Low complexity predominate over residues glutamate 476–glutamine 487.

The protein belongs to the krueppel C2H2-type zinc-finger protein family.

It is found in the nucleus. Functionally, may be involved in BMP2-induced transcription. This Danio rerio (Zebrafish) protein is Zinc finger and BTB domain-containing protein 24 (zbtb24).